The following is a 548-amino-acid chain: Frizzled-7 (548 aa).

The signal sequence occupies residues 1-19; the sequence is MFATVSLLFCLLLQPSPSA. The Extracellular portion of the chain corresponds to 20 to 230; the sequence is QQYHGEKGIS…EEEVRFARLW (211 aa). The FZ domain maps to 31–150; sequence PDHGFCQPIS…HGAGEICVGQ (120 aa). 5 cysteine pairs are disulfide-bonded: Cys-36/Cys-97, Cys-44/Cys-90, Cys-81/Cys-118, Cys-107/Cys-147, and Cys-111/Cys-135. The N-linked (GlcNAc...) asparagine glycan is linked to Asn-50. A glycan (N-linked (GlcNAc...) asparagine) is linked at Asn-151. A helical membrane pass occupies residues 231–251; that stretch reads VGIWAILCGISTLFTVLTYLV. Residues 252 to 262 are Cytoplasmic-facing; that stretch reads DMRRFSYPERP. A helical membrane pass occupies residues 263-283; the sequence is IIFLSGCYFMVAVAYTAGFLL. Residues 284-310 lie on the Extracellular side of the membrane; sequence EERGVCVERFSEDSYRTVAQGTKKEGC. Residues 311 to 331 traverse the membrane as a helical segment; the sequence is TILFMILYFFGMASSIWWVIL. The Cytoplasmic segment spans residues 332-353; it reads SLTWFLAAGMKWGHEAIEANSQ. A helical membrane pass occupies residues 354–374; that stretch reads YFHLAAWAVPAVKTITILAMG. Residues 375–397 are Extracellular-facing; the sequence is QVDGDILSGVCYVGINSVDSLRG. The chain crosses the membrane as a helical span at residues 398-418; it reads FVLAPLFVYLFIGTSFLLAGF. At 419–444 the chain is on the cytoplasmic side; the sequence is VSLFRIRTIMKHDGTKTEKLEKLMVR. A helical membrane pass occupies residues 445–465; that stretch reads IGVFSVMYTVPATIVLACYFY. At 466-502 the chain is on the extracellular side; the sequence is EQAFRDTWEKTWLVQTCKGFAVPCPNYNFAPMSPDFT. Residues 503–523 form a helical membrane-spanning segment; sequence VFMIKYLMTMIVGITSSFWIW. The Cytoplasmic portion of the chain corresponds to 524–548; that stretch reads SGKTLQSWRRFYHRLSNGGKGETAV. A Lys-Thr-X-X-X-Trp motif, mediates interaction with the PDZ domain of Dvl family members motif is present at residues 526–531; the sequence is KTLQSW. A PDZ-binding motif is present at residues 546–548; sequence TAV.

Belongs to the G-protein coupled receptor Fz/Smo family. As to quaternary structure, interacts with wnt11 and sdc4. The extracellular domain interacts with the extracellular domain of pcdh8/papc.

It localises to the cell membrane. The protein resides in the endosome membrane. In terms of biological role, receptor for Wnt proteins. Acts in both canonical and non-canonical Wnt pathways. Although different papers report differing Wnt preferences, wnt5a, wnt8b and wnt11 have been proposed as synergists. In the canonical Wnt pathway, acts via beta-catenin to promote the expression of the dorsal genes siamois, twin and nodal3 and to establish the dorsal axis of the embryo and induce dorsal mesoderm formation. In a non-canonical Wnt/planar cell polarity (PCP) pathway, acts with sdc4 and dvl2/dsh to regulate convergent extension movements in gastrulation. Triggers phosphorylation of dvl2/dsh and its translocation to the plasma membrane. In a third branch of Wnt signaling, acts in a non-canonical pathway via trimeric G proteins, and independently of dvl2/dsh, to recruit protein kinase C (PKC) to the membrane and thus activate PKC. PKC signaling controls cell sorting and tissue separation during gastrulation. This chain is Frizzled-7, found in Xenopus tropicalis (Western clawed frog).